A 305-amino-acid polypeptide reads, in one-letter code: Dermonecrotic toxin LiSicTox-alphaIA2aiii (305 aa).

Positions Leu1–Ala17 are cleaved as a signal peptide. A propeptide spanning residues Ala18–Arg25 is cleaved from the precursor. His37 is an active-site residue. Mg(2+) contacts are provided by Glu57 and Asp59. His73 (nucleophile) is an active-site residue. 2 cysteine pairs are disulfide-bonded: Cys77/Cys83 and Cys79/Cys222. Residue Asp117 coordinates Mg(2+). Residue Asn282 is glycosylated (N-linked (GlcNAc...) asparagine).

Belongs to the arthropod phospholipase D family. Class II subfamily. It depends on Mg(2+) as a cofactor. Expressed by the venom gland.

Its subcellular location is the secreted. The enzyme catalyses an N-(acyl)-sphingosylphosphocholine = an N-(acyl)-sphingosyl-1,3-cyclic phosphate + choline. It carries out the reaction an N-(acyl)-sphingosylphosphoethanolamine = an N-(acyl)-sphingosyl-1,3-cyclic phosphate + ethanolamine. The catalysed reaction is a 1-acyl-sn-glycero-3-phosphocholine = a 1-acyl-sn-glycero-2,3-cyclic phosphate + choline. It catalyses the reaction a 1-acyl-sn-glycero-3-phosphoethanolamine = a 1-acyl-sn-glycero-2,3-cyclic phosphate + ethanolamine. Functionally, dermonecrotic toxins cleave the phosphodiester linkage between the phosphate and headgroup of certain phospholipids (sphingolipid and lysolipid substrates), forming an alcohol (often choline) and a cyclic phosphate. This toxin acts on sphingomyelin (SM). It may also act on ceramide phosphoethanolamine (CPE), lysophosphatidylcholine (LPC) and lysophosphatidylethanolamine (LPE), but not on lysophosphatidylserine (LPS), and lysophosphatidylglycerol (LPG). It acts by transphosphatidylation, releasing exclusively cyclic phosphate products as second products. Induces dermonecrosis, hemolysis, increased vascular permeability, edema, inflammatory response, and platelet aggregation. The chain is Dermonecrotic toxin LiSicTox-alphaIA2aiii from Loxosceles intermedia (Brown spider).